A 307-amino-acid chain; its full sequence is MILLSYLLTYLLCALTCSARAIHNGRSLIPRAGSLEQVTDFGDNPSNVKMYIYVPTNLASNPGIIVAIHYCTGTAQAYYQGSPYAQLAETHGFIVIYPESPYEGTCWDVSSQATLTHNGGGNSNSIANMVTWTTKQYNADSSKVFVTGTSSGAMMTNVMAATYPDLFAAGIAYAGVPAGCFLSTADQPDAWNSTCAQGQSITTPEHWASIAEAMYPDYSGSRPKMQIYHGNVDTTLYPQNYEETCKQWAGVFGYNYDAPESTESNTPEANWSRTTWGPNLQGILAGGVGHNIQIHGDEDMKWFGFTN.

Positions 1–19 (MILLSYLLTYLLCALTCSA) are cleaved as a signal peptide. The active-site Charge relay system is the serine 150. N-linked (GlcNAc...) asparagine glycans are attached at residues asparagine 192 and asparagine 270.

The protein belongs to the carbohydrate esterase 1 (CE1) family. AxeA subfamily. In terms of assembly, monomer.

Its subcellular location is the secreted. It catalyses the reaction Deacetylation of xylans and xylo-oligosaccharides.. The protein operates within glycan degradation; xylan degradation. Functionally, acetylxylan esterase involved in the hydrolysis of xylan, a major structural heterogeneous polysaccharide found in plant biomass representing the second most abundant polysaccharide in the biosphere, after cellulose. Degrades acetylated xylans by cleaving acetyl side groups from the hetero-xylan backbone. This is Probable acetylxylan esterase A (axeA) from Aspergillus flavus (strain ATCC 200026 / FGSC A1120 / IAM 13836 / NRRL 3357 / JCM 12722 / SRRC 167).